The primary structure comprises 395 residues: Phosphoglycerate kinase (395 aa).

Residues 21–23 (DLN), Arg36, 59–62 (HLGR), Arg113, and Arg146 each bind substrate. Residues Lys197, Glu324, and 350-353 (GGDT) contribute to the ATP site.

Belongs to the phosphoglycerate kinase family. Monomer.

The protein localises to the cytoplasm. The catalysed reaction is (2R)-3-phosphoglycerate + ATP = (2R)-3-phospho-glyceroyl phosphate + ADP. The protein operates within carbohydrate degradation; glycolysis; pyruvate from D-glyceraldehyde 3-phosphate: step 2/5. The chain is Phosphoglycerate kinase from Acinetobacter baumannii (strain ATCC 17978 / DSM 105126 / CIP 53.77 / LMG 1025 / NCDC KC755 / 5377).